The following is a 175-amino-acid chain: MGAAESSMFNSLEKNSNFSGPELMRLKKRFMKLDKDGSGSIDKDEFLQIPQIANNPLAHRMIAIFDEDGSGTVDFQEFVGGLSAFSSKGGRDEKLRFAFKVYDMDRDGYISNGELYLVLKQMVGNNLKDQQLQQIVDKTIMEADKDGDGKLSFEEFTQMVASTDIVKQMTLEDLF.

4 consecutive EF-hand domains span residues 21 to 56 (PELM…ANNP), 60 to 88 (RMIA…FSSK), 90 to 125 (GRDE…MVGN), and 131 to 166 (QLQQ…TDIV). Ca(2+) contacts are provided by Asp-34, Asp-36, Ser-38, Ser-40, Glu-45, Asp-66, Asp-68, Ser-70, Thr-72, Glu-77, Asp-103, Asp-105, Asp-107, Tyr-109, Glu-114, Asp-144, Asp-146, Asp-148, Lys-150, and Glu-155.

Belongs to the calcineurin regulatory subunit family. As to quaternary structure, composed of a catalytic subunit (A) and a regulatory subunit (B).

Its function is as follows. Regulatory subunit of calcineurin, a calcium-dependent, calmodulin stimulated protein phosphatase. Confers calcium sensitivity. Plays a central role in virulence and antifungal drug action. This Cryptococcus neoformans var. neoformans serotype D (strain B-3501A) (Filobasidiella neoformans) protein is Calcineurin subunit B (CNB1).